Here is a 933-residue protein sequence, read N- to C-terminus: Bromodomain testis-specific protein (933 aa).

The interval 1-21 (MSMSSRHLHSSIVNPPPPEYI) is disordered. The region spanning 28 to 134 (RLTNQLQYLE…KVFMEKIAEM (107 aa)) is the Bromo 1 domain. The short motif at 214–225 (KGIKRKADTTTP) is the Nuclear localization signal element. The tract at residues 235 to 263 (ESSPTLSEPKPNKILSGTEKTRSAETSAV) is disordered. One can recognise a Bromo 2 domain in the interval 278-385 (NQICEQLKHC…DVFEGMFAKI (108 aa)). Disordered stretches follow at residues 398-425 (RYKTSTEESSSSSSSEQSSSSDSEDERA), 576-610 (KPSSIKSLKSKEQLNKEKKQELEKRLRDVSGQLSS), and 627-662 (GGPSRLSESSTSSSASDVSNSSDSSSSDSSDSESAT). Residues 404–418 (EESSSSSSSEQSSSS) are compositionally biased toward low complexity. A coiled-coil region spans residues 423–448 (ERAQHLALLQEQLRAVQEQLKALTET). The 83-residue stretch at 495–577 (VSDEEEDVKP…VCLRKRPKKP (83 aa)) folds into the NET domain. Residues 584-603 (KSKEQLNKEKKQELEKRLRD) are compositionally biased toward basic and acidic residues. Residues 630-660 (SRLSESSTSSSASDVSNSSDSSSSDSSDSES) show a composition bias toward low complexity. A coiled-coil region spans residues 829–917 (AKEERERALK…RREAMAGTID (89 aa)).

This sequence belongs to the BET family.

The protein localises to the nucleus. Functionally, testis-specific chromatin protein that specifically binds histone H4 acetylated at 'Lys-5' and 'Lys-8' (H4K5ac and H4K8ac, respectively) and plays a key role in spermatogenesis. Required in late pachytene spermatocytes: plays a role in meiotic and post-meiotic cells by binding to acetylated histones at the promoter of specific meiotic and post-meiotic genes, facilitating their activation at the appropriate time. In the post-meiotic phase of spermatogenesis, binds to hyperacetylated histones and participates in their general removal from DNA. Also recognizes and binds a subset of butyrylated histones: able to bind histone H4 butyrylated at 'Lys-8' (H4K8ac), while it is not able to bind H4 butyrylated at 'Lys-5' (H4K5ac). This Xenopus tropicalis (Western clawed frog) protein is Bromodomain testis-specific protein (brdt).